A 110-amino-acid chain; its full sequence is uncharacterized protein (110 aa).

2 disordered regions span residues 1 to 41 (MEWG…ERAQ) and 65 to 110 (LRQL…ASES). Positions 38-68 (ERAQQLLDAVEQRQRQLLDTIAACEEMLRQL) form a coiled coil.

This is an uncharacterized protein from Mus musculus (Mouse).